We begin with the raw amino-acid sequence, 177 residues long: UPF0114 protein HPP12_0190 (177 aa).

4 helical membrane passes run 15–35 (WLLAPLCIAMSLVLVVLGYAF), 54–74 (LVLSALGLVDLLFMAGLVLMV), 102–122 (FNALKLKVSLSIVAISAIFLL), and 145–165 (PIFWQVVINLVFVCSALLAAV).

Belongs to the UPF0114 family.

Its subcellular location is the cell membrane. The polypeptide is UPF0114 protein HPP12_0190 (Helicobacter pylori (strain P12)).